Reading from the N-terminus, the 544-residue chain is Apolipoprotein N-acyltransferase 1 (544 aa).

Transmembrane regions (helical) follow at residues 30-50 (LNLN…FLLL), 57-79 (FSFL…WIIF), 91-111 (KYCI…SYFS), 115-135 (FIFQ…GFLG), 157-177 (IFGV…SASF), and 197-217 (PMMI…FTKI). Residues 225–501 (ARIALVQPNR…KDILVADVTV (277 aa)) form the CN hydrolase domain. The active-site Proton acceptor is E272. Residue K360 is part of the active site. The active-site Nucleophile is the C412. A helical membrane pass occupies residues 514-534 (GDFFGVLCTIVLILNLCFIII).

This sequence belongs to the CN hydrolase family. Apolipoprotein N-acyltransferase subfamily.

The protein resides in the cell inner membrane. It carries out the reaction N-terminal S-1,2-diacyl-sn-glyceryl-L-cysteinyl-[lipoprotein] + a glycerophospholipid = N-acyl-S-1,2-diacyl-sn-glyceryl-L-cysteinyl-[lipoprotein] + a 2-acyl-sn-glycero-3-phospholipid + H(+). Its pathway is protein modification; lipoprotein biosynthesis (N-acyl transfer). In terms of biological role, catalyzes the phospholipid dependent N-acylation of the N-terminal cysteine of apolipoprotein, the last step in lipoprotein maturation. This Treponema denticola (strain ATCC 35405 / DSM 14222 / CIP 103919 / JCM 8153 / KCTC 15104) protein is Apolipoprotein N-acyltransferase 1.